Here is a 356-residue protein sequence, read N- to C-terminus: tRNA N6-adenosine threonylcarbamoyltransferase (356 aa).

Positions 115 and 119 each coordinate Fe cation. Substrate contacts are provided by residues 138–142 (LVSGG), D171, G184, and N283. D311 is a Fe cation binding site.

Belongs to the KAE1 / TsaD family. Fe(2+) serves as cofactor.

Its subcellular location is the cytoplasm. The enzyme catalyses L-threonylcarbamoyladenylate + adenosine(37) in tRNA = N(6)-L-threonylcarbamoyladenosine(37) in tRNA + AMP + H(+). In terms of biological role, required for the formation of a threonylcarbamoyl group on adenosine at position 37 (t(6)A37) in tRNAs that read codons beginning with adenine. Is involved in the transfer of the threonylcarbamoyl moiety of threonylcarbamoyl-AMP (TC-AMP) to the N6 group of A37, together with TsaE and TsaB. TsaD likely plays a direct catalytic role in this reaction. The protein is tRNA N6-adenosine threonylcarbamoyltransferase of Prochlorococcus marinus (strain MIT 9515).